The chain runs to 696 residues: Gametogenetin-binding protein 2 (696 aa).

Serine 360 carries the post-translational modification Phosphoserine.

Interacts with GGN.

The protein localises to the cytoplasmic vesicle. In terms of biological role, may be involved in spermatogenesis. This Rattus norvegicus (Rat) protein is Gametogenetin-binding protein 2 (Ggnbp2).